The primary structure comprises 858 residues: Leucine--tRNA ligase (858 aa).

The short motif at 43–54 (PYPSGDGLHVGH) is the 'HIGH' region element. A 'KMSKS' region motif is present at residues 629-633 (KMSKS). Lysine 632 is an ATP binding site.

Belongs to the class-I aminoacyl-tRNA synthetase family.

The protein localises to the cytoplasm. It catalyses the reaction tRNA(Leu) + L-leucine + ATP = L-leucyl-tRNA(Leu) + AMP + diphosphate. This Treponema denticola (strain ATCC 35405 / DSM 14222 / CIP 103919 / JCM 8153 / KCTC 15104) protein is Leucine--tRNA ligase.